Reading from the N-terminus, the 589-residue chain is ATP-dependent lipid A-core flippase (589 aa).

6 helical membrane-spanning segments follow: residues 37–57 (ALAI…PALL), 72–92 (LWLV…SGFL), 151–171 (IMKL…LVYL), 173–193 (WKLM…IQVL), 260–280 (SAIT…IALL), and 286–306 (TTTV…IAPV). Positions 37–318 (ALAIGATIVA…LSDAATPVTR (282 aa)) constitute an ABC transmembrane type-1 domain. The ABC transporter domain maps to 350 to 584 (IEFADVSVIY…NGAYAHLYRL (235 aa)). 384-391 (GASGSGKT) lines the ATP pocket.

The protein belongs to the ABC transporter superfamily. Lipid exporter (TC 3.A.1.106) family. Homodimer.

It is found in the cell inner membrane. The catalysed reaction is ATP + H2O + lipid A-core oligosaccharideSide 1 = ADP + phosphate + lipid A-core oligosaccharideSide 2.. Functionally, involved in lipopolysaccharide (LPS) biosynthesis. Translocates lipid A-core from the inner to the outer leaflet of the inner membrane. Transmembrane domains (TMD) form a pore in the inner membrane and the ATP-binding domain (NBD) is responsible for energy generation. The chain is ATP-dependent lipid A-core flippase from Polaromonas sp. (strain JS666 / ATCC BAA-500).